The chain runs to 233 residues: Ribonuclease 3 (233 aa).

The RNase III domain maps to 7–136 (KQYLLSEFNI…FIGALYLDQG (130 aa)). Glu49 provides a ligand contact to Mg(2+). Residue Asp53 is part of the active site. Mg(2+) contacts are provided by Asp122 and Glu125. Residue Glu125 is part of the active site. The region spanning 162–232 (DFKSRLQEKL…ARAALKLLEE (71 aa)) is the DRBM domain.

It belongs to the ribonuclease III family. Homodimer. Mg(2+) is required as a cofactor.

It is found in the cytoplasm. The enzyme catalyses Endonucleolytic cleavage to 5'-phosphomonoester.. Digests double-stranded RNA. Involved in the processing of primary rRNA transcript to yield the immediate precursors to the large and small rRNAs (23S and 16S). Processes some mRNAs, and tRNAs when they are encoded in the rRNA operon. Processes pre-crRNA and tracrRNA of type II CRISPR loci if present in the organism. In Leuconostoc citreum (strain KM20), this protein is Ribonuclease 3.